Here is a 158-residue protein sequence, read N- to C-terminus: Large ribosomal subunit protein uL30 (158 aa).

It belongs to the universal ribosomal protein uL30 family. As to quaternary structure, part of the 50S ribosomal subunit.

The protein is Large ribosomal subunit protein uL30 of Sulfurisphaera tokodaii (strain DSM 16993 / JCM 10545 / NBRC 100140 / 7) (Sulfolobus tokodaii).